A 261-amino-acid chain; its full sequence is V-type proton ATPase subunit D (261 aa).

Position 241 is a phosphoserine (S241).

It belongs to the V-ATPase D subunit family. In terms of assembly, V-ATPase is a heteromultimeric enzyme composed of a peripheral catalytic V1 complex (components A to H) attached to an integral membrane V0 proton pore complex (components: a, c, c'', d and e).

It is found in the vacuole membrane. In terms of biological role, subunit of the peripheral V1 complex of vacuolar ATPase. V-ATPase is responsible for acidifying a variety of intracellular compartments in eukaryotic cells, thus providing most of the energy required for transport processes in the vacuolar system. In Arabidopsis thaliana (Mouse-ear cress), this protein is V-type proton ATPase subunit D (VHA-D).